We begin with the raw amino-acid sequence, 1129 residues long: Nuclear pore complex protein 15 (1129 aa).

The protein belongs to the nucleoporin Nup133 family.

The protein localises to the nucleus envelope. Its subcellular location is the nucleus. It localises to the nuclear pore complex. In terms of biological role, important for early nematode development. This is Nuclear pore complex protein 15 from Caenorhabditis elegans.